The sequence spans 545 residues: CTP synthase (545 aa).

The segment at 1-266 (MTTRYIFVTG…DDLVTKRFGL (266 aa)) is amidoligase domain. Position 14 (S14) interacts with CTP. Residue S14 participates in UTP binding. ATP is bound by residues 15–20 (SLGKGI) and D72. Mg(2+) is bound by residues D72 and E140. Residues 147–149 (DIE), 187–192 (KTKPTQ), and K223 contribute to the CTP site. UTP contacts are provided by residues 187-192 (KTKPTQ) and K223. 239 to 241 (KDV) contributes to the ATP binding site. The region spanning 291 to 542 (TIGMVGKYTE…VAAAVAYQKR (252 aa)) is the Glutamine amidotransferase type-1 domain. G352 contributes to the L-glutamine binding site. C379 (nucleophile; for glutamine hydrolysis) is an active-site residue. L-glutamine is bound by residues 380 to 383 (LGMQ), E403, and R470. Catalysis depends on residues H515 and E517.

The protein belongs to the CTP synthase family. As to quaternary structure, homotetramer.

The enzyme catalyses UTP + L-glutamine + ATP + H2O = CTP + L-glutamate + ADP + phosphate + 2 H(+). The catalysed reaction is L-glutamine + H2O = L-glutamate + NH4(+). It catalyses the reaction UTP + NH4(+) + ATP = CTP + ADP + phosphate + 2 H(+). The protein operates within pyrimidine metabolism; CTP biosynthesis via de novo pathway; CTP from UDP: step 2/2. With respect to regulation, allosterically activated by GTP, when glutamine is the substrate; GTP has no effect on the reaction when ammonia is the substrate. The allosteric effector GTP functions by stabilizing the protein conformation that binds the tetrahedral intermediate(s) formed during glutamine hydrolysis. Inhibited by the product CTP, via allosteric rather than competitive inhibition. Its function is as follows. Catalyzes the ATP-dependent amination of UTP to CTP with either L-glutamine or ammonia as the source of nitrogen. Regulates intracellular CTP levels through interactions with the four ribonucleotide triphosphates. This is CTP synthase from Shewanella loihica (strain ATCC BAA-1088 / PV-4).